The sequence spans 319 residues: Taste receptor type 2 member 30 (319 aa).

Met-1 is a topological domain (extracellular). A helical transmembrane segment spans residues 2–22 (ITFLPIIFSILIVVIFVVGNF). The Cytoplasmic portion of the chain corresponds to 23–46 (ANGFIALVNSIEWVKRQKISFVDQ). Residues 47–67 (ILTALAVSRVGLLWVLLLHWY) form a helical membrane-spanning segment. Over 68–86 (ATQLNPAFYSVEVRITVYN) the chain is Extracellular. Residues 87-107 (VWAVTNHFSSWLATSLSMFYL) traverse the membrane as a helical segment. Residues 108 to 126 (LKIANFSNLIFLRIKRRVK) lie on the Cytoplasmic side of the membrane. Residues 127-147 (SVVLVILLGPLLFLVCHLFVI) form a helical membrane-spanning segment. Topologically, residues 148 to 178 (NMDETIWTKEYEGNMTWKIKLKSAMYHSNMT) are extracellular. 2 N-linked (GlcNAc...) asparagine glycosylation sites follow: Asn-161 and Asn-176. A helical membrane pass occupies residues 179 to 199 (LTILANFVPLTLTLISFLLLI). Over 200-229 (CSLCKHLKKMQLHGKGSQDPSTKVHIKALQ) the chain is Cytoplasmic. The chain crosses the membrane as a helical span at residues 230 to 250 (TVTSFLLLCAIYFLSMIISVC). The Extracellular portion of the chain corresponds to 251 to 259 (NLGRLQKQP). A helical membrane pass occupies residues 260-280 (VFMFCQAIIFSYPSTHPFILI). The Cytoplasmic segment spans residues 281 to 319 (LGNKKLKQIFLSVLWHVRYWVKDRSLRLHRFTRAALCKG).

This sequence belongs to the G-protein coupled receptor T2R family.

It localises to the membrane. In terms of biological role, receptor that may play a role in the perception of bitterness and is gustducin-linked. May play a role in sensing the chemical composition of the gastrointestinal content. The activity of this receptor may stimulate alpha gustducin, mediate PLC-beta-2 activation and lead to the gating of TRPM5. This chain is Taste receptor type 2 member 30 (TAS2R30), found in Pan paniscus (Pygmy chimpanzee).